We begin with the raw amino-acid sequence, 418 residues long: MKAEIISVGTEILLGDIVNTNSQFLAKELASLGIEVYHQSTVGDNKQRLLECFDESLKRSDFVITTGGLGPTGDDMTKETAAEYFGQKLELHKPSLEVLESFFVKTGKKMAENNMKQVYFPKDAIVLKNNNGTAPGAILKKDGKFIIVLPGPPREMKAMFNESVKPYLQQFTNEMLVSKTLRLYGIGESNLELEILDIINEQTNPTVALYAKELEVTIRITAKAENEREAFKLIKPVEEKIKSRVGKYVYTEGDISISEGETALEDAVSKLLVEKNLTIAVAESCTGGLVSSSLINYPGISSVFLEGCVTYSNDSKMKRLGVKRETLEEFGAVSEQTAIEMAEGVAKGLKANIGISTTGVAGPGGGTKEKPVGLVYTAIYINGKTIVKKNIFNGDRRKIRLRATRDLLNELRIQLEKL.

The protein belongs to the CinA family.

The protein is Putative competence-damage inducible protein of Clostridioides difficile (strain 630) (Peptoclostridium difficile).